The primary structure comprises 246 residues: tRNA pseudouridine synthase A (246 aa).

Aspartate 52 acts as the Nucleophile in catalysis. Tyrosine 111 contributes to the substrate binding site.

The protein belongs to the tRNA pseudouridine synthase TruA family. In terms of assembly, homodimer.

It carries out the reaction uridine(38/39/40) in tRNA = pseudouridine(38/39/40) in tRNA. Functionally, formation of pseudouridine at positions 38, 39 and 40 in the anticodon stem and loop of transfer RNAs. This is tRNA pseudouridine synthase A from Parvibaculum lavamentivorans (strain DS-1 / DSM 13023 / NCIMB 13966).